The following is a 319-amino-acid chain: Movement protein (319 aa).

The interval 1 to 20 is disordered; that stretch reads MNSSVEKQNSEIPEKENEEF. A coiled-coil region spans residues 289-319; that stretch reads KETSPSSSHQKSLEEISDKIDTLVVKLNNIS.

The protein belongs to the caulimoviridae movement protein family. In terms of assembly, homotrimer, through the coiled-coil domain. Interacts with VAP.

It is found in the host cell junction. The protein localises to the host plasmodesma. Functionally, transports viral genome to neighboring plant cells directly through plasmosdesmata, without any budding. The movement protein allows efficient cell to cell propagation, by bypassing the host cell wall barrier. Acts by forming tubules structures that increase the size exclusion limit (SEL) of plasmodesmata, thereby allowing viral ribonucleocapsids to spread directly to neighboring cells. In Dianthus caryophyllus (Carnation), this protein is Movement protein.